We begin with the raw amino-acid sequence, 500 residues long: NAD(P)H-quinone oxidoreductase chain 4, chloroplastic (500 aa).

The next 14 helical transmembrane spans lie at 4–24 (FPWL…MLFL), 35–55 (YTIC…CYNF), 87–107 (IGTI…AFPV), 113–130 (LFHF…GSFS), 134–154 (LLLF…LLSM), 167–187 (FILY…GISL), 211–231 (ILFY…IPLH), 242–262 (HYST…YGLV), 272–292 (AHSM…IYAA), 305–325 (IAYS…SITD), 330–350 (GAIL…FLAG), 386–406 (LALP…GIIT), 416–436 (ILII…LLSM), and 462–482 (LFLS…PDFV).

Belongs to the complex I subunit 4 family.

The protein resides in the plastid. Its subcellular location is the chloroplast thylakoid membrane. The catalysed reaction is a plastoquinone + NADH + (n+1) H(+)(in) = a plastoquinol + NAD(+) + n H(+)(out). The enzyme catalyses a plastoquinone + NADPH + (n+1) H(+)(in) = a plastoquinol + NADP(+) + n H(+)(out). The sequence is that of NAD(P)H-quinone oxidoreductase chain 4, chloroplastic from Nasturtium officinale (Watercress).